The following is a 261-amino-acid chain: Undecaprenyl-diphosphatase (261 aa).

The next 8 helical transmembrane spans lie at T16–F36, G40–W60, F82–I102, L107–A127, I140–V160, F183–M203, S211–I231, and F239–L259.

Belongs to the UppP family.

It localises to the cell membrane. The catalysed reaction is di-trans,octa-cis-undecaprenyl diphosphate + H2O = di-trans,octa-cis-undecaprenyl phosphate + phosphate + H(+). Functionally, catalyzes the dephosphorylation of undecaprenyl diphosphate (UPP). Confers resistance to bacitracin. The chain is Undecaprenyl-diphosphatase from Desulforudis audaxviator (strain MP104C).